A 422-amino-acid chain; its full sequence is Tyrosine--tRNA ligase (422 aa).

Y36 provides a ligand contact to L-tyrosine. The 'HIGH' region motif lies at 41–50 (PTADSLHIGH). Y175 and Q179 together coordinate L-tyrosine. Positions 235-239 (KFGKT) match the 'KMSKS' region motif. K238 provides a ligand contact to ATP. An S4 RNA-binding domain is found at 354–411 (TSLQEALTKSKLATSRSQARYFIKSNAITINAHKQSKIEYIFQDSDRIYNLYTLLKRG).

Belongs to the class-I aminoacyl-tRNA synthetase family. TyrS type 1 subfamily. In terms of assembly, homodimer.

The protein localises to the cytoplasm. It catalyses the reaction tRNA(Tyr) + L-tyrosine + ATP = L-tyrosyl-tRNA(Tyr) + AMP + diphosphate + H(+). Catalyzes the attachment of tyrosine to tRNA(Tyr) in a two-step reaction: tyrosine is first activated by ATP to form Tyr-AMP and then transferred to the acceptor end of tRNA(Tyr). The protein is Tyrosine--tRNA ligase of Blochmanniella floridana.